The chain runs to 137 residues: Protein CTLA-2-alpha (137 aa).

A signal peptide spans 1-27 (MMVSICEQKLQHFSAVFLLILCLGMMS). Repeat copies occupy residues 39 to 41 (EWK) and 42 to 44 (EWK). Positions 39–44 (EWKEWK) are 2 X 3 AA tandem repeats of E-W-K. The tract at residues 114-137 (APDLPEYEDLGKNSYLTPGRAQPE) is disordered.

This sequence to the propeptide regions of cysteine proteases.

It is found in the secreted. Not known, expressed in activated T-cell. This Mus musculus (Mouse) protein is Protein CTLA-2-alpha (Ctla2a).